Consider the following 305-residue polypeptide: UDP-N-acetylenolpyruvoylglucosamine reductase (305 aa).

Positions 34 to 199 (RVGGPAQVLF…TSARFRGEVK (166 aa)) constitute an FAD-binding PCMH-type domain. R179 is a catalytic residue. S228 acts as the Proton donor in catalysis. E298 is an active-site residue.

It belongs to the MurB family. The cofactor is FAD.

The protein localises to the cytoplasm. The catalysed reaction is UDP-N-acetyl-alpha-D-muramate + NADP(+) = UDP-N-acetyl-3-O-(1-carboxyvinyl)-alpha-D-glucosamine + NADPH + H(+). Its pathway is cell wall biogenesis; peptidoglycan biosynthesis. Functionally, cell wall formation. The protein is UDP-N-acetylenolpyruvoylglucosamine reductase of Bradyrhizobium diazoefficiens (strain JCM 10833 / BCRC 13528 / IAM 13628 / NBRC 14792 / USDA 110).